Reading from the N-terminus, the 404-residue chain is S-adenosylmethionine synthase (404 aa).

His-16 serves as a coordination point for ATP. Asp-18 contacts Mg(2+). Position 44 (Glu-44) interacts with K(+). The L-methionine site is built by Glu-57 and Gln-100. The interval 100-110 is flexible loop; it reads QSPEINQGVAR. ATP is bound by residues 177–179, Asp-257, 263–264, Ala-280, and Lys-284; these read DGK and RK. Asp-257 serves as a coordination point for L-methionine. Lys-288 is a binding site for L-methionine.

The protein belongs to the AdoMet synthase family. As to quaternary structure, homotetramer; dimer of dimers. It depends on Mg(2+) as a cofactor. The cofactor is K(+).

The protein resides in the cytoplasm. It catalyses the reaction L-methionine + ATP + H2O = S-adenosyl-L-methionine + phosphate + diphosphate. The protein operates within amino-acid biosynthesis; S-adenosyl-L-methionine biosynthesis; S-adenosyl-L-methionine from L-methionine: step 1/1. In terms of biological role, catalyzes the formation of S-adenosylmethionine (AdoMet) from methionine and ATP. The overall synthetic reaction is composed of two sequential steps, AdoMet formation and the subsequent tripolyphosphate hydrolysis which occurs prior to release of AdoMet from the enzyme. This is S-adenosylmethionine synthase from Bifidobacterium adolescentis (strain ATCC 15703 / DSM 20083 / NCTC 11814 / E194a).